The chain runs to 957 residues: MTQTLSQLENSGAFIERHIGPDAAQQQEMLNAVGAQSLNALTGQIVPKDIQLATPPQVGAPATEYAALAELKAIASRNKRFTSYIGMGYTAVQLPPVILRNMLENPGWYTAYTPYQPEVSQGRLEALLNFQQVTLDLTGLDMASASLLDEATAAAEAMAMAKRVSKLKNANRFFVASDVHPQTLDVVRTRAETFGFEVIVDDAQKVLDHQDVFGVLLQQVGTTGEIHDYTALISELKSRKIVVSVAADIMALVLLTAPGKQGADIVFGSAQRFGVPMGYGGPHAAFFAAKDEYKRSMPGRIIGVSKDAAGNTALRMAMQTREQHIRREKANSNICTSQVLLANIASLYAVYHGPVGLKRIANRIHRLTDILAAGLQQKGLKLRHAHYFDTLCVEVADKAGVLTRAEAAEINLRSDILNAVGITLDETTTRENVMQLFSVLLGDNHGLDIDTLDKDVAHDSRSIQPAMLRDDEILTHPVFNRYHSETEMMRYMHSLERKDLALNQAMIPLGSCTMKLNAAAEMIPITWPEFAELHPFCPPEQAEGYQQMIAQLADWLVKLTGYDAVCMQPNSGAQGEYAGLLAIRHYHESCNEGHRDICLIPASAHGTNPASAHMAGMQVVVVACDKNGNIDLTDLRAKAEQAGDNLSCIMVTYPSTHGVYEETIREVCEVVHQFGGQVYLDGANMNAQVGITSPGFIGADVSHLNLHKTFCIPHGGGGPGMGPIGVKAHLAPFVPGHSVVQIEGMLTRQGAVSAAPFGSASILPISWMYIRMMGAEGLKKASQVAILNANYIASRLQDAFPVLYTGRDGRVAHECILDIRPLKEETGISELDIAKRLIDYGFHAPTMSFPVAGTLMVEPTESESKVELDRFIDAMLAIRAEIDQVKAGVWPLEDNPLVNAPHIQSELVAEWAHPYSREVAVFPAGVADKYWPTVKRLDDVYGDRNLFCSCVPISEYQ.

Residue lysine 708 is modified to N6-(pyridoxal phosphate)lysine.

The protein belongs to the GcvP family. The glycine cleavage system is composed of four proteins: P, T, L and H. It depends on pyridoxal 5'-phosphate as a cofactor.

The catalysed reaction is N(6)-[(R)-lipoyl]-L-lysyl-[glycine-cleavage complex H protein] + glycine + H(+) = N(6)-[(R)-S(8)-aminomethyldihydrolipoyl]-L-lysyl-[glycine-cleavage complex H protein] + CO2. In terms of biological role, the glycine cleavage system catalyzes the degradation of glycine. The P protein binds the alpha-amino group of glycine through its pyridoxal phosphate cofactor; CO(2) is released and the remaining methylamine moiety is then transferred to the lipoamide cofactor of the H protein. The polypeptide is Glycine dehydrogenase (decarboxylating) (Escherichia coli (strain ATCC 8739 / DSM 1576 / NBRC 3972 / NCIMB 8545 / WDCM 00012 / Crooks)).